A 432-amino-acid chain; its full sequence is D-amino acid dehydrogenase (432 aa).

3-17 is an FAD binding site; sequence VVILGSGVVGVTSAW.

It belongs to the DadA oxidoreductase family. Requires FAD as cofactor.

It catalyses the reaction a D-alpha-amino acid + A + H2O = a 2-oxocarboxylate + AH2 + NH4(+). It functions in the pathway amino-acid degradation; D-alanine degradation; NH(3) and pyruvate from D-alanine: step 1/1. Functionally, oxidative deamination of D-amino acids. The chain is D-amino acid dehydrogenase from Escherichia fergusonii (strain ATCC 35469 / DSM 13698 / CCUG 18766 / IAM 14443 / JCM 21226 / LMG 7866 / NBRC 102419 / NCTC 12128 / CDC 0568-73).